Consider the following 27-residue polypeptide: uncharacterized protein (27 aa).

A helical membrane pass occupies residues 6–26 (IIVLGALIALLELIRFLLQLL).

The protein belongs to the DinQ family.

It is found in the cell inner membrane. This is an uncharacterized protein from Escherichia coli (strain K12).